Here is a 396-residue protein sequence, read N- to C-terminus: MAKEKFDRSKSHANIGTIGHVDHGKTTLTAAITTVLHKKSGKGTAMAYDQIDGAPEERERGITISTAHVEYETDNRHYAHVDCPGHADYVKNMITGAAQMDGAILVVSAADGPMPQTREHILLSRNVGVPYIVVFLNKCDMVDDEELLELVEMEVRDLLSEYEFPGDDVPVIKGSALKALEGDAQYEEKIFELMAAVDEYIPTPERETDKPFMMPVEDVFSITGRGTVATGRVERGQVKVGDEVEIIGLQEENKKTTVTGVEMFRKLLDYAEAGDNIGALLRGVSREEIQRGQVLAQPGTITPHKKFKAEVYVLSKEEGGRHTPFFSNYRPQFYFRTTDVTGIIQLPEGVEMVMPGDNIEMTVELISTIAIEDGTRFSIREGGRTVGSGVVSSIIE.

A tr-type G domain is found at 10–205; that stretch reads KSHANIGTIG…AVDEYIPTPE (196 aa). The segment at 19-26 is G1; that stretch reads GHVDHGKT. Residue 19–26 participates in GTP binding; the sequence is GHVDHGKT. Threonine 26 provides a ligand contact to Mg(2+). Residues 61-65 are G2; sequence GITIS. Residues 82–85 form a G3 region; sequence DCPG. GTP contacts are provided by residues 82–86 and 137–140; these read DCPGH and NKCD. The G4 stretch occupies residues 137–140; the sequence is NKCD. Residues 175 to 177 are G5; the sequence is SAL.

The protein belongs to the TRAFAC class translation factor GTPase superfamily. Classic translation factor GTPase family. EF-Tu/EF-1A subfamily. In terms of assembly, monomer.

Its subcellular location is the cytoplasm. The enzyme catalyses GTP + H2O = GDP + phosphate + H(+). In terms of biological role, GTP hydrolase that promotes the GTP-dependent binding of aminoacyl-tRNA to the A-site of ribosomes during protein biosynthesis. The polypeptide is Elongation factor Tu (Bacillus licheniformis (strain ATCC 14580 / DSM 13 / JCM 2505 / CCUG 7422 / NBRC 12200 / NCIMB 9375 / NCTC 10341 / NRRL NRS-1264 / Gibson 46)).